A 293-amino-acid chain; its full sequence is Probable xyloglucan endotransglucosylase/hydrolase protein B (293 aa).

An N-terminal signal peptide occupies residues 1–21; sequence MASSLLILCLVLVSLASSALC. Positions 23–220 constitute a GH16 domain; sequence APRRPVDVPF…WSKAPFVAEY (198 aa). Residue E106 is the Nucleophile of the active site. The active-site Proton donor is E110. Xyloglucan is bound at residue E110. N114 is a glycosylation site (N-linked (GlcNAc...) asparagine). Xyloglucan is bound by residues 123–125, 133–135, 199–200, and G204; these read QTN, DRE, and DW. Disulfide bonds link C228/C237 and C274/C287. Xyloglucan is bound at residue R279.

This sequence belongs to the glycosyl hydrolase 16 family. XTH group 1 subfamily. Post-translationally, contains at least one intrachain disulfide bond essential for its enzymatic activity. As to expression, predominantly expressed in the phloem fibers of growing internodes. Weakly or not expressed in the xylem. In the internode, it is expressed closer to the bottom of the internode compared to XTHA.

It is found in the secreted. Its subcellular location is the cell wall. The protein localises to the extracellular space. The protein resides in the apoplast. It catalyses the reaction breaks a beta-(1-&gt;4) bond in the backbone of a xyloglucan and transfers the xyloglucanyl segment on to O-4 of the non-reducing terminal glucose residue of an acceptor, which can be a xyloglucan or an oligosaccharide of xyloglucan.. Functionally, catalyzes xyloglucan endohydrolysis (XEH) and/or endotransglycosylation (XET). Cleaves and religates xyloglucan polymers, an essential constituent of the primary cell wall, and thereby participates in cell wall construction of growing tissues. The sequence is that of Probable xyloglucan endotransglucosylase/hydrolase protein B (XTHB) from Phaseolus angularis (Azuki bean).